Here is a 246-residue protein sequence, read N- to C-terminus: Uridylate kinase (246 aa).

ATP is bound at residue 11-14 (KISG). Gly-53 lines the UMP pocket. Residues Gly-54 and Arg-58 each contribute to the ATP site. UMP-binding positions include Asp-74 and 135 to 142 (TGSPYLTT). 3 residues coordinate ATP: Thr-162, Tyr-169, and Asp-172.

It belongs to the UMP kinase family. Homohexamer.

The protein resides in the cytoplasm. It catalyses the reaction UMP + ATP = UDP + ADP. The protein operates within pyrimidine metabolism; CTP biosynthesis via de novo pathway; UDP from UMP (UMPK route): step 1/1. Its activity is regulated as follows. Inhibited by UTP. Catalyzes the reversible phosphorylation of UMP to UDP. The polypeptide is Uridylate kinase (Chlamydia abortus (strain DSM 27085 / S26/3) (Chlamydophila abortus)).